The chain runs to 58 residues: uncharacterized protein (58 aa).

This is an uncharacterized protein from Sinorhizobium fredii (strain NBRC 101917 / NGR234).